The following is a 123-amino-acid chain: Integration host factor subunit alpha (123 aa).

Residues 97 to 123 (NANGSAPSMSSSASAVDDDKSESASRT) form a disordered region. Low complexity predominate over residues 98-111 (ANGSAPSMSSSASA). Residues 113–123 (DDDKSESASRT) show a composition bias toward basic and acidic residues.

The protein belongs to the bacterial histone-like protein family. As to quaternary structure, heterodimer of an alpha and a beta chain.

Its function is as follows. This protein is one of the two subunits of integration host factor, a specific DNA-binding protein that functions in genetic recombination as well as in transcriptional and translational control. The polypeptide is Integration host factor subunit alpha (Rhodopseudomonas palustris (strain BisB5)).